A 265-amino-acid chain; its full sequence is Phosphatidylglycerol--prolipoprotein diacylglyceryl transferase (265 aa).

Helical transmembrane passes span 17–37 (VAVRWYGLMYLLAFVLFVVLG), 57–77 (LLLYGVLGVIIGGRLGEVLFY), 89–109 (ILAVWKGGMSFHGGFLGVLVA), 127–147 (FIAPLVPTGLAAGRIGNFING), 176–196 (QLYQAAGEGLLLFAIVWVFAA), 201–218 (LRAVSAVFLIGYGSLRFV), and 233–253 (LVPGLSTAQWLCVPMVVVGLA). Arginine 140 provides a ligand contact to a 1,2-diacyl-sn-glycero-3-phospho-(1'-sn-glycerol).

This sequence belongs to the Lgt family.

The protein resides in the cell inner membrane. The enzyme catalyses L-cysteinyl-[prolipoprotein] + a 1,2-diacyl-sn-glycero-3-phospho-(1'-sn-glycerol) = an S-1,2-diacyl-sn-glyceryl-L-cysteinyl-[prolipoprotein] + sn-glycerol 1-phosphate + H(+). The protein operates within protein modification; lipoprotein biosynthesis (diacylglyceryl transfer). Its function is as follows. Catalyzes the transfer of the diacylglyceryl group from phosphatidylglycerol to the sulfhydryl group of the N-terminal cysteine of a prolipoprotein, the first step in the formation of mature lipoproteins. This is Phosphatidylglycerol--prolipoprotein diacylglyceryl transferase from Azoarcus sp. (strain BH72).